The following is a 304-amino-acid chain: uncharacterized protein (304 aa).

72–79 (GPTGSGKT) serves as a coordination point for ATP.

It belongs to the CbbQ/NirQ/NorQ/GpvN family.

This is an uncharacterized protein from Bacillus subtilis (strain 168).